The chain runs to 425 residues: Serine--tRNA ligase (425 aa).

L-serine is bound at residue 232-234 (TSE). Residues 263-265 (RRE) and Val-279 each bind ATP. Residue Glu-286 participates in L-serine binding. Residue 350–353 (EVVS) coordinates ATP. L-serine is bound at residue Thr-387.

Belongs to the class-II aminoacyl-tRNA synthetase family. Type-1 seryl-tRNA synthetase subfamily. Homodimer. The tRNA molecule binds across the dimer.

The protein localises to the cytoplasm. It catalyses the reaction tRNA(Ser) + L-serine + ATP = L-seryl-tRNA(Ser) + AMP + diphosphate + H(+). It carries out the reaction tRNA(Sec) + L-serine + ATP = L-seryl-tRNA(Sec) + AMP + diphosphate + H(+). It functions in the pathway aminoacyl-tRNA biosynthesis; selenocysteinyl-tRNA(Sec) biosynthesis; L-seryl-tRNA(Sec) from L-serine and tRNA(Sec): step 1/1. In terms of biological role, catalyzes the attachment of serine to tRNA(Ser). Is also able to aminoacylate tRNA(Sec) with serine, to form the misacylated tRNA L-seryl-tRNA(Sec), which will be further converted into selenocysteinyl-tRNA(Sec). This is Serine--tRNA ligase from Methanoregula boonei (strain DSM 21154 / JCM 14090 / 6A8).